A 1001-amino-acid polypeptide reads, in one-letter code: Protein MEI2-like 4 (1001 aa).

A disordered region spans residues 100–120; the sequence is HANLPPSPWRPDQETGRQTDS. RRM domains lie at 275-348 and 360-433; these read RTLF…YSIP and GTIV…TSRL. Disordered stretches follow at residues 767-815 and 941-1001; these read GGPS…KKQY and FHSD…PAKD. Over residues 793–803 the composition is skewed to basic and acidic residues; it reads PGERMRSRRND. Residues 978–994 show a composition bias toward polar residues; that stretch reads DISITSVNCDTSTNGVD.

Functionally, probable RNA-binding protein that may play a role in growth regulation. The chain is Protein MEI2-like 4 (ML4) from Oryza sativa subsp. japonica (Rice).